The primary structure comprises 213 residues: Imidazole glycerol phosphate synthase subunit HisH (213 aa).

Residues 1–212 form the Glutamine amidotransferase type-1 domain; it reads MLAILDYKAG…HRYCTEAADA (212 aa). Residue Cys79 is the Nucleophile of the active site. Catalysis depends on residues His187 and Glu189.

Heterodimer of HisH and HisF.

Its subcellular location is the cytoplasm. The catalysed reaction is 5-[(5-phospho-1-deoxy-D-ribulos-1-ylimino)methylamino]-1-(5-phospho-beta-D-ribosyl)imidazole-4-carboxamide + L-glutamine = D-erythro-1-(imidazol-4-yl)glycerol 3-phosphate + 5-amino-1-(5-phospho-beta-D-ribosyl)imidazole-4-carboxamide + L-glutamate + H(+). It carries out the reaction L-glutamine + H2O = L-glutamate + NH4(+). The protein operates within amino-acid biosynthesis; L-histidine biosynthesis; L-histidine from 5-phospho-alpha-D-ribose 1-diphosphate: step 5/9. In terms of biological role, IGPS catalyzes the conversion of PRFAR and glutamine to IGP, AICAR and glutamate. The HisH subunit catalyzes the hydrolysis of glutamine to glutamate and ammonia as part of the synthesis of IGP and AICAR. The resulting ammonia molecule is channeled to the active site of HisF. This is Imidazole glycerol phosphate synthase subunit HisH from Nitratidesulfovibrio vulgaris (strain DP4) (Desulfovibrio vulgaris).